The primary structure comprises 161 residues: MSGHGAPEIDLTTLNPAETSQLKLAIVAASWHTQIMDGLLDGALRAAKDAGISEPTVLRVPGSFELPVAAARLAKHFDAVVALGVVIRGGTPHFEYVCEAATMGLTDVSVNTGVPVGFGVLTCDTEQQGLDRAGLPGSKEDKGHEAVTAALATAVTLKQYS.

5-amino-6-(D-ribitylamino)uracil contacts are provided by residues Trp-31, 63 to 65, and 85 to 87; these read SFE and VVI. Residue 90 to 91 participates in (2S)-2-hydroxy-3-oxobutyl phosphate binding; the sequence is GT. His-93 (proton donor) is an active-site residue. Phe-118 is a 5-amino-6-(D-ribitylamino)uracil binding site. Arg-132 lines the (2S)-2-hydroxy-3-oxobutyl phosphate pocket.

Belongs to the DMRL synthase family.

The enzyme catalyses (2S)-2-hydroxy-3-oxobutyl phosphate + 5-amino-6-(D-ribitylamino)uracil = 6,7-dimethyl-8-(1-D-ribityl)lumazine + phosphate + 2 H2O + H(+). Its pathway is cofactor biosynthesis; riboflavin biosynthesis; riboflavin from 2-hydroxy-3-oxobutyl phosphate and 5-amino-6-(D-ribitylamino)uracil: step 1/2. In terms of biological role, catalyzes the formation of 6,7-dimethyl-8-ribityllumazine by condensation of 5-amino-6-(D-ribitylamino)uracil with 3,4-dihydroxy-2-butanone 4-phosphate. This is the penultimate step in the biosynthesis of riboflavin. In Arthrobacter sp. (strain FB24), this protein is 6,7-dimethyl-8-ribityllumazine synthase.